We begin with the raw amino-acid sequence, 142 residues long: Hemoglobin subunit alpha-1 (142 aa).

At S1 the chain carries N-acetylserine. One can recognise a Globin domain in the interval 1-142 (SLSDKDKAAV…VALALAERYR (142 aa)). Residue H59 coordinates O2. Heme b is bound at residue H88.

It belongs to the globin family. Hb1 is a heterotetramer of two alpha-2 chains and two beta chains, while Hb2 is a heterotetramer of two alpha-2 chains and two beta chains. Red blood cells.

In terms of biological role, involved in oxygen transport from gills to the various peripheral tissues. The chain is Hemoglobin subunit alpha-1 (hba1) from Notothenia angustata (Rockcod).